The sequence spans 167 residues: Gem-associated protein 6 (167 aa).

The 68-residue stretch at Lys-7–Gly-74 folds into the Sm domain. Residues Glu-69 to Gln-167 enclose the AD domain. 2 positions are modified to phosphoserine: Ser-95 and Ser-166.

As to quaternary structure, part of the core SMN complex that contains SMN1, GEMIN2/SIP1, DDX20/GEMIN3, GEMIN4, GEMIN5, GEMIN6, GEMIN7, GEMIN8 and STRAP/UNRIP. Part of the SMN-Sm complex that contains SMN1, GEMIN2/SIP1, DDX20/GEMIN3, GEMIN4, GEMIN5, GEMIN6, GEMIN7, GEMIN8, STRAP/UNRIP and the Sm proteins SNRPB, SNRPD1, SNRPD2, SNRPD3, SNRPE, SNRPF and SNRPG. Interacts with GEMIN7; the interaction is direct. Interacts with GEMIN8; the interaction is direct. Interacts with SNRPB, SNRPD2, SNRPD3 and SNRPE; the interaction is direct.

It is found in the nucleus. Its subcellular location is the nucleoplasm. The protein resides in the gem. It localises to the cytoplasm. In terms of biological role, the SMN complex catalyzes the assembly of small nuclear ribonucleoproteins (snRNPs), the building blocks of the spliceosome, and thereby plays an important role in the splicing of cellular pre-mRNAs. Most spliceosomal snRNPs contain a common set of Sm proteins SNRPB, SNRPD1, SNRPD2, SNRPD3, SNRPE, SNRPF and SNRPG that assemble in a heptameric protein ring on the Sm site of the small nuclear RNA to form the core snRNP (Sm core). In the cytosol, the Sm proteins SNRPD1, SNRPD2, SNRPE, SNRPF and SNRPG are trapped in an inactive 6S pICln-Sm complex by the chaperone CLNS1A that controls the assembly of the core snRNP. To assemble core snRNPs, the SMN complex accepts the trapped 5Sm proteins from CLNS1A forming an intermediate. Binding of snRNA inside 5Sm triggers eviction of the SMN complex, thereby allowing binding of SNRPD3 and SNRPB to complete assembly of the core snRNP. The sequence is that of Gem-associated protein 6 (GEMIN6) from Homo sapiens (Human).